A 953-amino-acid polypeptide reads, in one-letter code: Anion exchange protein 4 (953 aa).

The segment at 20-41 is disordered; the sequence is SEQLDGDLGPGSGLDGPSDIDN. A run of 4 helical transmembrane segments spans residues 385–405, 413–433, 470–490, and 501–521; these read AVLY…GLLG, GVLE…LMAG, VGIW…SLLV, and FCAL…LNLI. The membrane (anion exchange) stretch occupies residues 385–953; it reads AVLYIYLATV…KAPEINISVN (569 aa). Residues Asn546 and Asn570 are each glycosylated (N-linked (GlcNAc...) asparagine). Helical transmembrane passes span 594 to 614, 635 to 655, 682 to 702, 728 to 748, 785 to 805, 807 to 827, and 869 to 889; these read VPDI…CAIA, FSSV…GLAT, PWWL…LIFM, LFCV…WYVS, GLVV…LKFI, MPVL…SMQF, and LWVI…LGLV. The span at 916 to 927 shows a compositional bias: basic and acidic residues; it reads KTIPENRPEPEH. Positions 916 to 938 are disordered; sequence KTIPENRPEPEHLFSGNDSENSE. N-linked (GlcNAc...) asparagine glycans are attached at residues Asn932 and Asn949.

This sequence belongs to the anion exchanger (TC 2.A.31) family. In terms of tissue distribution, expressed in kidney and gastrointestinal tract. In kidney, it is highly expressed in the cortex, expressed at intermediate level in the outer medulla and not expressed in the inner medulla. It is expressed in the cecum, while it is absent in other segments of gastrointestinal tract. Highly expressed in the cortical collecting duct (CCD). Expressed in both alpha-intercalated cells and beta-intercalated cells in the CCD (at protein level).

The protein localises to the basolateral cell membrane. It carries out the reaction 2 hydrogencarbonate(out) + chloride(in) + Na(+)(out) = 2 hydrogencarbonate(in) + chloride(out) + Na(+)(in). The enzyme catalyses K(+)(in) + 2 hydrogencarbonate(in) + chloride(out) = K(+)(out) + 2 hydrogencarbonate(out) + chloride(in). The catalysed reaction is Li(+)(in) + 2 hydrogencarbonate(in) + chloride(out) = Li(+)(out) + 2 hydrogencarbonate(out) + chloride(in). It catalyses the reaction Rb(+)(in) + 2 hydrogencarbonate(in) + chloride(out) = Rb(+)(out) + 2 hydrogencarbonate(out) + chloride(in). It carries out the reaction Cs(+)(in) + 2 hydrogencarbonate(in) + chloride(out) = Cs(+)(out) + 2 hydrogencarbonate(out) + chloride(in). Its activity is regulated as follows. 4,4'-diisothiocyanatodihydrostilbene-2,2'- disulfonic acid (H2DIDS) potently inhibits chloride/hydrogencarbonate antiporter activity with 50% inhibition at about 5 uM. Completely inhibits chloride/hydrogencarbonate antiporter activity at 200 uM of 4,4'-diisothiocyano-trans-stilbene-2,2'-disulfonic acid (DIDS). Functionally, electroneutral Cl(-)/HCO3(-) antiporter that favors chloride ion entry and efflux of hydrogencarbonate and sodium ion across the basolateral membrane and may participate in salivary secretion. Also mediates Cl(-)/HCO3(-) exchange activity in the presence of K(+) as well as Cs(+), Li(+), and Rb(+). Does not contribute to Cl(-)/HCO3(-) exchanger in the apical membrane of the upper villous epithelium. The protein is Anion exchange protein 4 of Rattus norvegicus (Rat).